The sequence spans 983 residues: GPI ethanolamine phosphate transferase 2, catalytic subunit (983 aa).

Over 1–431 the chain is Lumenal; sequence MRLGSGTFAT…SLSAQVAQYD (431 aa). Asn-194 carries an N-linked (GlcNAc...) asparagine glycan. The next 12 membrane-spanning stretches (helical) occupy residues 432-452, 471-491, 506-526, 552-572, 699-719, 721-741, 752-772, 789-809, 812-832, 879-899, 919-939, and 955-975; these read IYSMMVGTVVVLEVLTLLLLS, GFSLLFYLVILVLSAVHVIVC, LAAGGVMVLASALLCVIVSVL, LLILLGTAGHVLSLGASSFVE, VLAALSLLVVFVLVQRGCSPV, KAALALGLLGVYCYRAAIGSV, ISKGIIEARFVYVFVLGILFT, LKTVGLWEIYSGLVLLAALLF, HNLPVLAFSLLIQTLMTKFIW, VEIPAVLLTAFGTYAGPVLWA, ACFCYALICSIPVFTYIVLVT, and LLYEGMHLLITAAVCVFFTAM.

Belongs to the PIGG/PIGN/PIGO family. PIGG subfamily. In terms of assembly, part of the ethanolamine phosphate transferase 2 complex composed by PIGG and PIGF. PIGF is required to stabilize it. Competes with PIGO for the binding of PIGF.

Its subcellular location is the endoplasmic reticulum membrane. Its pathway is glycolipid biosynthesis; glycosylphosphatidylinositol-anchor biosynthesis. Functionally, catalytic subunit of the ethanolamine phosphate transferase 2 complex that transfers an ethanolamine phosphate (EtNP) from a phosphatidylethanolamine (PE) to the 6-OH position of the second alpha-1,6-linked mannose of a 6-PEtn-alpha-D-Man-(1-&gt;2)-alpha-D-Man-(1-&gt;6)-2-PEtn-alpha-D-Man-(1-&gt;4)-alpha-D-GlcN-(1-&gt;6)-(1-radyl,2-acyl-sn-glycero-3-phospho)-2-acyl-inositol (also termed H7) intermediate to generate a 6-PEtn-alpha-D-Man-(1-&gt;2)-6-PEtn-alpha-D-Man-(1-&gt;6)-2-PEtn-alpha-D-Man-(1-&gt;4)-alpha-D-GlcN-(1-&gt;6)-(1-radyl,2-acyl-sn-glycero-3-phospho)-2-acyl-inositol (also termed H8) and participates in the eleventh step of the glycosylphosphatidylinositol-anchor biosynthesis. In Homo sapiens (Human), this protein is GPI ethanolamine phosphate transferase 2, catalytic subunit.